Here is a 248-residue protein sequence, read N- to C-terminus: Methionine aminopeptidase 1 (248 aa).

His-77 serves as a coordination point for substrate. The a divalent metal cation site is built by Asp-94, Asp-105, and His-168. His-175 is a binding site for substrate. A divalent metal cation contacts are provided by Glu-201 and Glu-232.

In terms of assembly, monomer. The cofactor is Co(2+). Zn(2+) serves as cofactor. Requires Mn(2+) as cofactor. Fe(2+) is required as a cofactor.

It localises to the cytoplasm. It catalyses the reaction Release of N-terminal amino acids, preferentially methionine, from peptides and arylamides.. Its function is as follows. Removes the N-terminal methionine from nascent proteins. The N-terminal methionine is often cleaved when the second residue in the primary sequence is small and uncharged (Met-Ala-, Cys, Gly, Pro, Ser, Thr, or Val). Requires deformylation of the N(alpha)-formylated initiator methionine before it can be hydrolyzed. In Bacillus subtilis (strain 168), this protein is Methionine aminopeptidase 1.